Reading from the N-terminus, the 168-residue chain is UPF0178 protein RBAM_023530 (168 aa).

The protein belongs to the UPF0178 family.

This Bacillus velezensis (strain DSM 23117 / BGSC 10A6 / LMG 26770 / FZB42) (Bacillus amyloliquefaciens subsp. plantarum) protein is UPF0178 protein RBAM_023530.